Reading from the N-terminus, the 71-residue chain is uncharacterized protein (71 aa).

The protein resides in the mitochondrion matrix. Its subcellular location is the kinetoplast. This is an uncharacterized protein from Trypanosoma brucei brucei.